We begin with the raw amino-acid sequence, 382 residues long: Dual-specificity RNA methyltransferase RlmN (382 aa).

E94 acts as the Proton acceptor in catalysis. Residues E100–D336 form the Radical SAM core domain. A disulfide bridge connects residues C107 and C342. Residues C114, C118, and C121 each coordinate [4Fe-4S] cluster. S-adenosyl-L-methionine contacts are provided by residues G168–E169, S200, S222–H224, and N299. The active-site S-methylcysteine intermediate is C342.

Belongs to the radical SAM superfamily. RlmN family. [4Fe-4S] cluster is required as a cofactor.

The protein resides in the cytoplasm. The catalysed reaction is adenosine(2503) in 23S rRNA + 2 reduced [2Fe-2S]-[ferredoxin] + 2 S-adenosyl-L-methionine = 2-methyladenosine(2503) in 23S rRNA + 5'-deoxyadenosine + L-methionine + 2 oxidized [2Fe-2S]-[ferredoxin] + S-adenosyl-L-homocysteine. The enzyme catalyses adenosine(37) in tRNA + 2 reduced [2Fe-2S]-[ferredoxin] + 2 S-adenosyl-L-methionine = 2-methyladenosine(37) in tRNA + 5'-deoxyadenosine + L-methionine + 2 oxidized [2Fe-2S]-[ferredoxin] + S-adenosyl-L-homocysteine. Functionally, specifically methylates position 2 of adenine 2503 in 23S rRNA and position 2 of adenine 37 in tRNAs. m2A2503 modification seems to play a crucial role in the proofreading step occurring at the peptidyl transferase center and thus would serve to optimize ribosomal fidelity. This Legionella pneumophila (strain Paris) protein is Dual-specificity RNA methyltransferase RlmN.